The sequence spans 311 residues: Ketoisovalerate oxidoreductase subunit VorB (311 aa).

Heterotetramer of one alpha, one beta, one delta and one gamma chain.

The catalysed reaction is 3-methyl-2-oxobutanoate + 2 oxidized [2Fe-2S]-[ferredoxin] + CoA = 2-methylpropanoyl-CoA + 2 reduced [2Fe-2S]-[ferredoxin] + CO2 + H(+). The protein is Ketoisovalerate oxidoreductase subunit VorB (vorB) of Pyrococcus furiosus (strain ATCC 43587 / DSM 3638 / JCM 8422 / Vc1).